Consider the following 269-residue polypeptide: Troponin I (269 aa).

A disordered region spans residues 1–104; that stretch reads MADDEKKAAA…AKKGFMTPER (104 aa). Alanine 2 bears the N-acetylalanine mark. Residues 9 to 50 show a composition bias toward low complexity; that stretch reads AAPAAAPAAAAKPAAPAAAPAANGKAAPAANGKAAPAAAAAP. A compositionally biased stretch (basic and acidic residues) spans 56–91; that stretch reads DPNDPKVKAEEAKKAKQAEIERKRAEVRKRMEEASK. Residues 162 to 171 are troponin T-interaction; sequence ERMYICEGQK. The segment at 189–202 is actin-binding; sequence NAQVNDLRGKFVKP. Lysine 201 and lysine 205 each carry N6,N6,N6-trimethyllysine. Residues 239–269 form a disordered region; the sequence is TLEEEEKEKKPDWSKGKPGDAKVKEEVEAEA.

It belongs to the troponin I family. As to quaternary structure, binds to actin and tropomyosin. In terms of tissue distribution, all isoforms are expressed in somatic muscle. Isoforms containing exon 6a1 (isoforms 1 and 2) are expressed in all muscles but highest expression is in abdominal muscle and splanchnic muscle of the gut. Isoforms containing exon 6b1 (isoforms 5, 6, 9 and 10) are highly expressed in the tergal depressor of trochanter (TDT) muscle.

Functionally, troponin I is the ATPase inhibitory subunit of troponin in the thin filament regulatory complex. Involved in the development and maintenance of muscle and nervous system. May also be involved in the cytoskeletal apparatus. The polypeptide is Troponin I (wupA) (Drosophila melanogaster (Fruit fly)).